Consider the following 329-residue polypeptide: DNA-directed RNA polymerase subunit alpha (329 aa).

The alpha N-terminal domain (alpha-NTD) stretch occupies residues 1 to 234; that stretch reads MQGSVTEFLR…EQLDAFVELR (234 aa). Residues 248 to 329 are alpha C-terminal domain (alpha-CTD); sequence FDPILLRPVD…WPPASLVDDL (82 aa).

This sequence belongs to the RNA polymerase alpha chain family. Homodimer. The RNAP catalytic core consists of 2 alpha, 1 beta, 1 beta' and 1 omega subunit. When a sigma factor is associated with the core the holoenzyme is formed, which can initiate transcription.

It carries out the reaction RNA(n) + a ribonucleoside 5'-triphosphate = RNA(n+1) + diphosphate. Its function is as follows. DNA-dependent RNA polymerase catalyzes the transcription of DNA into RNA using the four ribonucleoside triphosphates as substrates. This Shewanella violacea (strain JCM 10179 / CIP 106290 / LMG 19151 / DSS12) protein is DNA-directed RNA polymerase subunit alpha.